A 337-amino-acid polypeptide reads, in one-letter code: Tetraacyldisaccharide 4'-kinase (337 aa).

An ATP-binding site is contributed by 51–58 (HLGGAGKT).

The protein belongs to the LpxK family.

The enzyme catalyses a lipid A disaccharide + ATP = a lipid IVA + ADP + H(+). It participates in glycolipid biosynthesis; lipid IV(A) biosynthesis; lipid IV(A) from (3R)-3-hydroxytetradecanoyl-[acyl-carrier-protein] and UDP-N-acetyl-alpha-D-glucosamine: step 6/6. Functionally, transfers the gamma-phosphate of ATP to the 4'-position of a tetraacyldisaccharide 1-phosphate intermediate (termed DS-1-P) to form tetraacyldisaccharide 1,4'-bis-phosphate (lipid IVA). This chain is Tetraacyldisaccharide 4'-kinase, found in Nitrobacter winogradskyi (strain ATCC 25391 / DSM 10237 / CIP 104748 / NCIMB 11846 / Nb-255).